The sequence spans 606 residues: 1-deoxy-D-xylulose-5-phosphate synthase (606 aa).

Thiamine diphosphate contacts are provided by residues His63 and 104-106 (GHS). A Mg(2+)-binding site is contributed by Asp137. Residues 138-139 (GS), Asn166, Tyr273, and Glu354 contribute to the thiamine diphosphate site. Asn166 is a binding site for Mg(2+).

This sequence belongs to the transketolase family. DXPS subfamily. In terms of assembly, homodimer. The cofactor is Mg(2+). Thiamine diphosphate serves as cofactor.

The enzyme catalyses D-glyceraldehyde 3-phosphate + pyruvate + H(+) = 1-deoxy-D-xylulose 5-phosphate + CO2. It participates in metabolic intermediate biosynthesis; 1-deoxy-D-xylulose 5-phosphate biosynthesis; 1-deoxy-D-xylulose 5-phosphate from D-glyceraldehyde 3-phosphate and pyruvate: step 1/1. Its function is as follows. Catalyzes the acyloin condensation reaction between C atoms 2 and 3 of pyruvate and glyceraldehyde 3-phosphate to yield 1-deoxy-D-xylulose-5-phosphate (DXP). The protein is 1-deoxy-D-xylulose-5-phosphate synthase of Sulfurimonas denitrificans (strain ATCC 33889 / DSM 1251) (Thiomicrospira denitrificans (strain ATCC 33889 / DSM 1251)).